The primary structure comprises 113 residues: Ig kappa chain V-II region 7S34.1 (113 aa).

A framework-1 region spans residues 1 to 23 (DIVMTQTAPSALVTPGESVSISC). The cysteines at positions 23 and 93 are disulfide-linked. A complementarity-determining-1 region spans residues 24–39 (RSSKSLLHSNGNTYLY). Positions 40–54 (WFLQRPGQCPQLLIY) are framework-2. The tract at residues 55–61 (RMSNLAS) is complementarity-determining-2. The segment at 62–93 (GVPDRFSGSGSGTAFTLRISRVEAEDVGVYYC) is framework-3. The complementarity-determining-3 stretch occupies residues 94 to 102 (MQQREYPYT). A framework-4 region spans residues 103 to 112 (FGGGTKLEIK).

This chain is Ig kappa chain V-II region 7S34.1, found in Mus musculus (Mouse).